Reading from the N-terminus, the 602-residue chain is MYIMRSSFNFLNLLVSDKMIKKIEILNNSYVEEFIEKTAELCNPSSIYLVTSEEDKEYIRRKAIETKEELPLKTLGHTIHFDHPLDQARARDDTFILTDDKIPFVNTKKREDGIREVLSLLKDSMKGREMYVGFYSLGPKNSIFQHLAIQISDSPYVIHSENILYRLDFDDFKGNKQFLKFVHSKGELDIKKRRIMIDLKEDTVYSVNTTYAGNSVGLKKLALRLTIAKAVKEGWLSEHMAIIGFEGDKGTHYFTASFPSGSGKTSTSMMGKLISDDLAFIREINGVARAVNPEIGVFGIIQGINSKDDPIIWEVLHKPNEVIFSNVLMTEDGYVYWEGSDDKRPERGINYEGFWSNDMNKPASHPNARFTVPLTAFKNLDENYDNPDGVEIEGIIFGVRDYDTLIPVVEAFSCSHGIVTIGASMESARTSAVIGKGDEYEFNPMAILDFMPIHLGEYLGNYLEFCKKLKKVPRIFGFNYFLKEGNRFLNSKEDKRVWIKWAVKRVEGSVDVIYTPIGLVPYYEDLKTLFREMLNKEYTIEDYEKQFTLKLDKYLEKNERILKLYKEILAPKEVIAELEQQKERILKYIDKYGKRISPLDLR.

Substrate-binding positions include Arg-89 and 211 to 213 (YAG). Mn(2+)-binding residues include Lys-220 and His-239. Ser-260 is a substrate binding site. 261–266 (GSGKTS) provides a ligand contact to GTP. The active site involves Ser-262. Asp-277 is a Mn(2+) binding site. 367 to 369 (NAR) lines the substrate pocket. Arg-369 and Arg-400 together coordinate GTP.

Belongs to the phosphoenolpyruvate carboxykinase [GTP] family. The cofactor is Mn(2+).

The protein localises to the cytoplasm. It carries out the reaction oxaloacetate + GTP = phosphoenolpyruvate + GDP + CO2. Its pathway is carbohydrate biosynthesis; gluconeogenesis. Its function is as follows. Catalyzes the conversion of oxaloacetate (OAA) to phosphoenolpyruvate (PEP), the rate-limiting step in the metabolic pathway that produces glucose from lactate and other precursors derived from the citric acid cycle. The sequence is that of Phosphoenolpyruvate carboxykinase [GTP] from Sulfurisphaera tokodaii (strain DSM 16993 / JCM 10545 / NBRC 100140 / 7) (Sulfolobus tokodaii).